Consider the following 495-residue polypeptide: MLEHFCECYFDLSGLILCPVLGSIILLFIPNSSIRLIRLIGLCVSLITFLYSLVLWIQFDPSTAKFQFVESLRWLPYENIHLYMGIDGLSLFFVILTTFLIPICILVGWSGMRSFGKEYIIAFLICEFLMIAVFCMLDLLLFYVFFESVLIPMFIIIGVWGSRQRKIKAAYQFFLYTLLGSVFMLLAILLILLQTGTTDLQILLTTEFSERRQILLWIAFFASFAVKVPMVPVHIWLPEAHVEAPTAGSVILAGILLKLGTYGFLRFSIPMFPEATLCFTPFIYTLSAIAIIYTSLTTLRQIDLKKIIAYSSVAHMNLVTIGMFSLNIQGIGGSILLMLSHGLVSSALFLCVGVLYDRHKTRLVRYYGGLVSTMPNFSTIFFFFTLANMSLPGTSSFIGEFLILVGAFQRNSLVATLRALGMILGAAYSLWLYNRVVSGNLKPDFLYKFSDLNGREVFIFLPFLVGVVWMGVYPKVFLDCMHTSVSNLVQHGKFH.

Helical transmembrane passes span 9 to 29 (YFDLSGLILCPVLGSIILLFI), 39 to 59 (LIGLCVSLITFLYSLVLWIQF), 89 to 109 (LSLFFVILTTFLIPICILVGW), 118 to 138 (EYIIAFLICEFLMIAVFCMLD), 139 to 159 (LLLFYVFFESVLIPMFIIIGV), 173 to 193 (FFLYTLLGSVFMLLAILLILL), 214 to 234 (ILLWIAFFASFAVKVPMVPVH), 245 to 265 (PTAGSVILAGILLKLGTYGFL), 272 to 292 (FPEATLCFTPFIYTLSAIAII), 313 to 333 (VAHMNLVTIGMFSLNIQGIGG), 335 to 355 (ILLMLSHGLVSSALFLCVGVL), 367 to 387 (YGGLVSTMPNFSTIFFFFTLA), 388 to 408 (NMSLPGTSSFIGEFLILVGAF), 413 to 433 (LVATLRALGMILGAAYSLWLY), and 457 to 477 (VFIFLPFLVGVVWMGVYPKVF).

It belongs to the complex I subunit 4 family.

It localises to the mitochondrion membrane. It carries out the reaction a ubiquinone + NADH + 5 H(+)(in) = a ubiquinol + NAD(+) + 4 H(+)(out). In terms of biological role, core subunit of the mitochondrial membrane respiratory chain NADH dehydrogenase (Complex I) that is believed to belong to the minimal assembly required for catalysis. Complex I functions in the transfer of electrons from NADH to the respiratory chain. The immediate electron acceptor for the enzyme is believed to be ubiquinone. In Triticum aestivum (Wheat), this protein is NADH-ubiquinone oxidoreductase chain 4 (ND4).